The following is a 76-amino-acid chain: Sec-independent protein translocase protein TatA (76 aa).

Residues 1–21 (MGGLSIWHWLIVLLIVALVFG) traverse the membrane as a helical segment. Positions 43 to 76 (MKDGDAPADAQQLPRSGTVDVNAKEATRSDSNKA) are disordered. Over residues 64–76 (NAKEATRSDSNKA) the composition is skewed to basic and acidic residues.

It belongs to the TatA/E family. As to quaternary structure, the Tat system comprises two distinct complexes: a TatABC complex, containing multiple copies of TatA, TatB and TatC subunits, and a separate TatA complex, containing only TatA subunits. Substrates initially bind to the TatABC complex, which probably triggers association of the separate TatA complex to form the active translocon.

It localises to the cell inner membrane. Part of the twin-arginine translocation (Tat) system that transports large folded proteins containing a characteristic twin-arginine motif in their signal peptide across membranes. TatA could form the protein-conducting channel of the Tat system. This Burkholderia multivorans (strain ATCC 17616 / 249) protein is Sec-independent protein translocase protein TatA.